Consider the following 249-residue polypeptide: DNA polymerase sliding clamp 3 (249 aa).

It belongs to the PCNA family. As to quaternary structure, homotrimer. The subunits circularize to form a toroid; DNA passes through its center. Replication factor C (RFC) is required to load the toroid on the DNA.

Its function is as follows. Sliding clamp subunit that acts as a moving platform for DNA processing. Responsible for tethering the catalytic subunit of DNA polymerase and other proteins to DNA during high-speed replication. In Aeropyrum pernix (strain ATCC 700893 / DSM 11879 / JCM 9820 / NBRC 100138 / K1), this protein is DNA polymerase sliding clamp 3.